Consider the following 81-residue polypeptide: ATP synthase subunit c (81 aa).

The next 2 membrane-spanning stretches (helical) occupy residues 7–27 and 57–77; these read AASVLSAALAIGLGSLGPGLG and LAFMEALTIYGLVVALVLLFA.

The protein belongs to the ATPase C chain family. As to quaternary structure, F-type ATPases have 2 components, F(1) - the catalytic core - and F(0) - the membrane proton channel. F(1) has five subunits: alpha(3), beta(3), gamma(1), delta(1), epsilon(1). F(0) has four main subunits: a(1), b(1), b'(1) and c(10-14). The alpha and beta chains form an alternating ring which encloses part of the gamma chain. F(1) is attached to F(0) by a central stalk formed by the gamma and epsilon chains, while a peripheral stalk is formed by the delta, b and b' chains.

Its subcellular location is the cellular thylakoid membrane. F(1)F(0) ATP synthase produces ATP from ADP in the presence of a proton or sodium gradient. F-type ATPases consist of two structural domains, F(1) containing the extramembraneous catalytic core and F(0) containing the membrane proton channel, linked together by a central stalk and a peripheral stalk. During catalysis, ATP synthesis in the catalytic domain of F(1) is coupled via a rotary mechanism of the central stalk subunits to proton translocation. Its function is as follows. Key component of the F(0) channel; it plays a direct role in translocation across the membrane. A homomeric c-ring of between 10-14 subunits forms the central stalk rotor element with the F(1) delta and epsilon subunits. The sequence is that of ATP synthase subunit c from Synechococcus sp. (strain JA-3-3Ab) (Cyanobacteria bacterium Yellowstone A-Prime).